The primary structure comprises 241 residues: Phosphoadenosine 5'-phosphosulfate reductase (241 aa).

Cysteine 235 serves as the catalytic Nucleophile; cysteine thiosulfonate intermediate.

This sequence belongs to the PAPS reductase family. CysH subfamily.

It is found in the cytoplasm. The catalysed reaction is [thioredoxin]-disulfide + sulfite + adenosine 3',5'-bisphosphate + 2 H(+) = [thioredoxin]-dithiol + 3'-phosphoadenylyl sulfate. The protein operates within sulfur metabolism; hydrogen sulfide biosynthesis; sulfite from sulfate: step 3/3. Its function is as follows. Catalyzes the formation of sulfite from phosphoadenosine 5'-phosphosulfate (PAPS) using thioredoxin as an electron donor. This chain is Phosphoadenosine 5'-phosphosulfate reductase, found in Xanthomonas euvesicatoria pv. vesicatoria (strain 85-10) (Xanthomonas campestris pv. vesicatoria).